Reading from the N-terminus, the 135-residue chain is Ribosome-binding factor A (135 aa).

It belongs to the RbfA family. Monomer. Binds 30S ribosomal subunits, but not 50S ribosomal subunits or 70S ribosomes.

The protein localises to the cytoplasm. One of several proteins that assist in the late maturation steps of the functional core of the 30S ribosomal subunit. Associates with free 30S ribosomal subunits (but not with 30S subunits that are part of 70S ribosomes or polysomes). Required for efficient processing of 16S rRNA. May interact with the 5'-terminal helix region of 16S rRNA. The protein is Ribosome-binding factor A of Bartonella tribocorum (strain CIP 105476 / IBS 506).